A 99-amino-acid chain; its full sequence is Large ribosomal subunit protein uL23 (99 aa).

Belongs to the universal ribosomal protein uL23 family. In terms of assembly, part of the 50S ribosomal subunit. Contacts protein L29, and trigger factor when it is bound to the ribosome.

In terms of biological role, one of the early assembly proteins it binds 23S rRNA. One of the proteins that surrounds the polypeptide exit tunnel on the outside of the ribosome. Forms the main docking site for trigger factor binding to the ribosome. The protein is Large ribosomal subunit protein uL23 of Psychromonas ingrahamii (strain DSM 17664 / CCUG 51855 / 37).